Consider the following 309-residue polypeptide: D-allose kinase (309 aa).

Residues 10–17 (GVDMGATH) and 142–149 (GMGFAVWM) each bind ATP.

The protein belongs to the ROK (NagC/XylR) family.

The catalysed reaction is D-allose + ATP = D-allose 6-phosphate + ADP + H(+). The protein operates within carbohydrate degradation; D-allose degradation. Its function is as follows. Catalyzes the phosphorylation of D-allose to D-allose 6-phosphate. Also has low level glucokinase activity in vitro. The chain is D-allose kinase from Escherichia coli (strain K12).